Reading from the N-terminus, the 370-residue chain is DNA replication and repair protein RecF (370 aa).

G30–T37 lines the ATP pocket.

This sequence belongs to the RecF family.

Its subcellular location is the cytoplasm. In terms of biological role, the RecF protein is involved in DNA metabolism; it is required for DNA replication and normal SOS inducibility. RecF binds preferentially to single-stranded, linear DNA. It also seems to bind ATP. This chain is DNA replication and repair protein RecF, found in Listeria welshimeri serovar 6b (strain ATCC 35897 / DSM 20650 / CCUG 15529 / CIP 8149 / NCTC 11857 / SLCC 5334 / V8).